We begin with the raw amino-acid sequence, 95 residues long: MVTDAQQARLTAWVHGRVQGVGFRWWTRARALELGLAGSATNLPGNRVEVVAEGPRESCERLLEALRSPDTPGDVDHVAEQWSEPKGGLTGFVER.

The region spanning 9–95 (RLTAWVHGRV…KGGLTGFVER (87 aa)) is the Acylphosphatase-like domain. Residues Arg-24 and Asn-42 contribute to the active site.

The protein belongs to the acylphosphatase family.

It catalyses the reaction an acyl phosphate + H2O = a carboxylate + phosphate + H(+). The sequence is that of Acylphosphatase (acyP) from Saccharopolyspora erythraea (strain ATCC 11635 / DSM 40517 / JCM 4748 / NBRC 13426 / NCIMB 8594 / NRRL 2338).